Here is a 539-residue protein sequence, read N- to C-terminus: 3-hydroxy-3-methylglutaryl-coenzyme A reductase 1 (539 aa).

Residues 63 to 83 traverse the membrane as a helical segment; sequence FATVVCQLASVVYLLSLFAHP. The interval 84–124 is linker; that stretch reads DAPATTTGDDDDGQGGSRRARPAAAEPAPMHGHGGGMMEAD. Residues 87-116 form a disordered region; that stretch reads ATTTGDDDDGQGGSRRARPAAAEPAPMHGH. Residues 105–114 are compositionally biased toward low complexity; it reads PAAAEPAPMH. Positions 125–539 are catalytic; it reads DEEIVAAVAS…SSKDVAKAAS (415 aa). Glu218 serves as the catalytic Charge relay system. Asn282 carries N-linked (GlcNAc...) asparagine glycosylation. Active-site charge relay system residues include Lys350 and Asp426. The helical transmembrane segment at 496 to 516 threads the bilayer; sequence LATIVAGSVLAGELSLLAALA. His524 acts as the Proton donor in catalysis. An N-linked (GlcNAc...) asparagine glycan is attached at Asn528.

This sequence belongs to the HMG-CoA reductase family.

It localises to the endoplasmic reticulum membrane. The enzyme catalyses (R)-mevalonate + 2 NADP(+) + CoA = (3S)-3-hydroxy-3-methylglutaryl-CoA + 2 NADPH + 2 H(+). Its pathway is metabolic intermediate biosynthesis; (R)-mevalonate biosynthesis; (R)-mevalonate from acetyl-CoA: step 3/3. In terms of biological role, catalyzes the synthesis of mevalonate. The specific precursor of all isoprenoid compounds present in plants. This Oryza sativa subsp. indica (Rice) protein is 3-hydroxy-3-methylglutaryl-coenzyme A reductase 1 (HMG1).